Consider the following 456-residue polypeptide: Probable polygalacturonase At3g15720 (456 aa).

Positions 1–23 (MKKKTWFLNFSLFFLQIFTSSNA) are cleaved as a signal peptide. 6 PbH1 repeats span residues 169-195 (CNYV…DVGA), 196-217 (SSNV…AINS), 219-239 (TSNI…SIGS), 249-270 (VENV…RIKT), 278-299 (ARMI…IIDQ), and 314-341 (SSAV…DFRC). The active-site Proton donor is the D210. Residue H233 is part of the active site.

It belongs to the glycosyl hydrolase 28 family.

The protein localises to the secreted. Its subcellular location is the cell wall. It carries out the reaction (1,4-alpha-D-galacturonosyl)n+m + H2O = (1,4-alpha-D-galacturonosyl)n + (1,4-alpha-D-galacturonosyl)m.. The polypeptide is Probable polygalacturonase At3g15720 (Arabidopsis thaliana (Mouse-ear cress)).